The following is a 393-amino-acid chain: Staphopain B (393 aa).

An N-terminal signal peptide occupies residues 1 to 36; sequence MNSSYKSRVFNIISIIMVSMLILSLGAFANNNKAKA. A propeptide spanning residues 37–219 is cleaved from the precursor; the sequence is DSHSKQLEIN…KVEENEAIQE (183 aa). Catalysis depends on residues Cys-243, His-340, and Asn-360.

Belongs to the peptidase C47 family. In the cytoplasm, prematurely activated/folded SspB forms a stable non-covalent complex with SspC. Proteolytically cleaved by staphylococcal serine protease (SspA).

The protein localises to the secreted. Its activity is regulated as follows. Prematurely activated/folded staphopain B is inhibited by staphostatin B (SspC), which is probably required to protect staphylococcal cytoplasmic proteins from degradation by SspB. Functionally, cysteine protease that plays an important role in the inhibition of host innate immune response. Degrades host elastin, fibrogen, fibronectin and kininogen. Blocks phagocytosis of opsonised S.aureus by neutrophils and monocytes by inducing their death in a proteolytic activity-dependent manner. Decreases surface expression of the 'don't eat me' signal CD31 on neutrophils. Cleaves host galectin-3/LGALS3, thereby inhibiting the neutrophil-activating ability of the lectin. The chain is Staphopain B (sspB) from Staphylococcus aureus (strain Mu50 / ATCC 700699).